The primary structure comprises 301 residues: Nucleotide-binding protein Helmi_06460 (301 aa).

17-24 (GLSGAGKS) is a binding site for ATP. 68 to 71 (DIRG) lines the GTP pocket.

Belongs to the RapZ-like family.

In terms of biological role, displays ATPase and GTPase activities. This chain is Nucleotide-binding protein Helmi_06460, found in Heliobacterium modesticaldum (strain ATCC 51547 / Ice1).